The following is a 664-amino-acid chain: Probable LRR receptor-like serine/threonine-protein kinase At1g63430 (664 aa).

Residues 1–22 (MRSKYFCSLALVLGLFFVSCDG) form the signal peptide. The Extracellular segment spans residues 23 to 288 (FASNEVQALR…KHHRASKPKW (266 aa)). An N-linked (GlcNAc...) asparagine glycan is attached at Asn75. LRR repeat units lie at residues 94 to 116 (YLQELILHGNILIGTIPKEIGNL), 118 to 140 (NLKILDLGNNHLMGPIPAEIGSL), 142 to 165 (GIMIINLQSNGLTGKLPAELGNLK), and 166 to 178 (YLRELHIDRNRLQ). Residue Asn197 is glycosylated (N-linked (GlcNAc...) asparagine). A helical transmembrane segment spans residues 289 to 309 (LLALEIVTGSMVGLLLLVALF). Residues 310–664 (SAVHRWNNRS…LAWAELALDS (355 aa)) are Cytoplasmic-facing. The Protein kinase domain maps to 360 to 642 (EDFSNIIGLS…ELCETLESRI (283 aa)).

This sequence belongs to the protein kinase superfamily. Ser/Thr protein kinase family.

Its subcellular location is the cell membrane. The catalysed reaction is L-seryl-[protein] + ATP = O-phospho-L-seryl-[protein] + ADP + H(+). It carries out the reaction L-threonyl-[protein] + ATP = O-phospho-L-threonyl-[protein] + ADP + H(+). This Arabidopsis thaliana (Mouse-ear cress) protein is Probable LRR receptor-like serine/threonine-protein kinase At1g63430.